The sequence spans 726 residues: Eukaryotic translation initiation factor 3 subunit B (726 aa).

Residues 1-94 form a sufficient for interaction with HCR1 and TIF32 region; it reads MSAALEDIKL…LFVECASPAD (94 aa). Positions 1-219 are sufficient for interaction with PIC8; the sequence is MSAALEDIKL…GVVMWGGPHF (219 aa). In terms of domain architecture, RRM spans 37–120; that stretch reads QYIVVCGAPV…HRLFIYTMRD (84 aa). WD repeat units lie at residues 142–182, 186–224, 235–283, 331–374, 442–485, 505–549, and 566–611; these read FPTS…EESV, RKNWSTNYIRFSPKGTYLFSYHPQGVVMWGGPHFDRLRR, VSPS…LQST, LKVP…MSCK, ELKD…FAPE, ITDK…TDKN, and NSFP…VKEE.

This sequence belongs to the eIF-3 subunit B family. As to quaternary structure, component of the eukaryotic translation initiation factor 3 (eIF-3) complex.

It localises to the cytoplasm. RNA-binding component of the eukaryotic translation initiation factor 3 (eIF-3) complex, which is involved in protein synthesis of a specialized repertoire of mRNAs and, together with other initiation factors, stimulates binding of mRNA and methionyl-tRNAi to the 40S ribosome. The eIF-3 complex specifically targets and initiates translation of a subset of mRNAs involved in cell proliferation. This is Eukaryotic translation initiation factor 3 subunit B from Vanderwaltozyma polyspora (strain ATCC 22028 / DSM 70294 / BCRC 21397 / CBS 2163 / NBRC 10782 / NRRL Y-8283 / UCD 57-17) (Kluyveromyces polysporus).